Consider the following 911-residue polypeptide: Beta-galactosidase 12 (911 aa).

An N-terminal signal peptide occupies residues Met-1–Ala-25. Residue Glu-192 is the Proton donor of the active site. Glu-262 (nucleophile) is an active-site residue. Residues Asn-263, Asn-389, Asn-473, and Asn-777 are each glycosylated (N-linked (GlcNAc...) asparagine). Positions Glu-744–Ala-831 constitute an SUEL-type lectin domain.

Belongs to the glycosyl hydrolase 35 family.

The protein localises to the secreted. It is found in the extracellular space. It localises to the apoplast. It carries out the reaction Hydrolysis of terminal non-reducing beta-D-galactose residues in beta-D-galactosides.. This chain is Beta-galactosidase 12, found in Oryza sativa subsp. japonica (Rice).